A 43-amino-acid polypeptide reads, in one-letter code: Metallothionein A (43 aa).

The beta stretch occupies residues 1–16; sequence SCAGSCKCKNCRCRSC. The a divalent metal cation site is built by Cys-2, Cys-6, Cys-8, Cys-11, Cys-13, Cys-16, Cys-20, Cys-21, Cys-23, Cys-24, Cys-28, Cys-31, Cys-35, and Cys-37. The alpha stretch occupies residues 17–43; that stretch reads RKSCCSCCPAGCNNCAKGCVCKEPASS.

The protein belongs to the metallothionein superfamily. Type 1 family.

In terms of biological role, metallothioneins have a high content of cysteine residues that bind various heavy metals. The polypeptide is Metallothionein A (Colinus virginianus (Northern bobwhite)).